The chain runs to 275 residues: Probable dual specificity protein phosphatase DDB_G0271350 (275 aa).

The region spanning 2–143 (GISMILDNFL…LCDLELKLTN (142 aa)) is the Tyrosine-protein phosphatase domain. Cys-87 (phosphocysteine intermediate) is an active-site residue.

Belongs to the protein-tyrosine phosphatase family. Non-receptor class dual specificity subfamily.

It carries out the reaction O-phospho-L-tyrosyl-[protein] + H2O = L-tyrosyl-[protein] + phosphate. It catalyses the reaction O-phospho-L-seryl-[protein] + H2O = L-seryl-[protein] + phosphate. The catalysed reaction is O-phospho-L-threonyl-[protein] + H2O = L-threonyl-[protein] + phosphate. Has a dual specificity toward Ser/Thr and Tyr-containing proteins. The polypeptide is Probable dual specificity protein phosphatase DDB_G0271350 (Dictyostelium discoideum (Social amoeba)).